The sequence spans 208 residues: Small ribosomal subunit protein uS4 (208 aa).

One can recognise an S4 RNA-binding domain in the interval R98–E159.

It belongs to the universal ribosomal protein uS4 family. As to quaternary structure, part of the 30S ribosomal subunit. Contacts protein S5. The interaction surface between S4 and S5 is involved in control of translational fidelity.

Functionally, one of the primary rRNA binding proteins, it binds directly to 16S rRNA where it nucleates assembly of the body of the 30S subunit. In terms of biological role, with S5 and S12 plays an important role in translational accuracy. This chain is Small ribosomal subunit protein uS4, found in Geobacter sp. (strain M21).